Consider the following 383-residue polypeptide: Na(+)/H(+) antiporter NhaA (383 aa).

The next 11 helical transmembrane spans lie at 10–30, 56–76, 91–111, 121–141, 150–170, 174–194, 206–226, 254–274, 289–308, 327–347, and 355–375; these read LIGG…NNSP, LMHW…GLEI, IITP…IYLS, GWAI…ALLG, LLVI…IAIF, SLSL…IICN, VVLG…ATLA, PWII…ISFS, IIWG…LAVF, GISL…VLAF, and AIKI…YIVL.

Belongs to the NhaA Na(+)/H(+) (TC 2.A.33) antiporter family.

The protein localises to the cell inner membrane. It carries out the reaction Na(+)(in) + 2 H(+)(out) = Na(+)(out) + 2 H(+)(in). Its function is as follows. Na(+)/H(+) antiporter that extrudes sodium in exchange for external protons. The sequence is that of Na(+)/H(+) antiporter NhaA from Francisella tularensis subsp. tularensis (strain SCHU S4 / Schu 4).